The sequence spans 310 residues: Deoxyribonuclease gamma (310 aa).

A signal peptide spans 1 to 25 (MSLYPASPYLASLLLFILALHGALS). A Bipartite nuclear localization signal motif is present at residues 40-56 (KKENHNAMDIIVKIIKR). Active-site residues include E105 and H160. C199 and C236 are disulfide-bonded. The tract at residues 289 to 310 (SRAFTNSRKSVSLKKKKKGSRS) is not required for free DNA-nuclease activity but required for activity towards liposome-coated DNA. The Nuclear localization signal motif lies at 301 to 307 (LKKKKKG).

The protein belongs to the DNase I family. As to quaternary structure, monomer. It depends on Ca(2+) as a cofactor. Requires Mg(2+) as cofactor. Seems to be synthesized as an inactive precursor protein and converted into an active mature enzyme by removal of the N-terminal precursor peptide during apoptosis. Post-translationally, poly-ADP-ribosylated by PARP1. ADP-ribosylation negatively regulates enzymatic activity during apoptosis. In terms of tissue distribution, detected at high levels in spleen, lymph nodes, thymus and liver. Observed also in kidney and testis, but not in brain or heart.

The protein localises to the nucleus. Its subcellular location is the secreted. Inhibited by zinc. In terms of biological role, has DNA hydrolytic activity. Is capable of both single- and double-stranded DNA cleavage, producing DNA fragments with 3'-OH ends. Can cleave chromatin to nucleosomal units and cleaves nucleosomal and liposome-coated DNA. Acts in internucleosomal DNA fragmentation (INDF) during apoptosis and necrosis. The role in apoptosis includes myogenic and neuronal differentiation, and BCR-mediated clonal deletion of self-reactive B cells. Is active on chromatin in apoptotic cell-derived membrane-coated microparticles and thus suppresses anti-DNA autoimmunity. Together with DNASE1, plays a key role in degrading neutrophil extracellular traps (NETs). NETs are mainly composed of DNA fibers and are released by neutrophils to bind pathogens during inflammation. Degradation of intravascular NETs by DNASE1 and DNASE1L3 is required to prevent formation of clots that obstruct blood vessels and cause organ damage following inflammation. The protein is Deoxyribonuclease gamma (Dnase1l3) of Rattus norvegicus (Rat).